A 425-amino-acid polypeptide reads, in one-letter code: Histidine--tRNA ligase 2 (425 aa).

Belongs to the class-II aminoacyl-tRNA synthetase family. As to quaternary structure, homodimer.

Its subcellular location is the cytoplasm. The enzyme catalyses tRNA(His) + L-histidine + ATP = L-histidyl-tRNA(His) + AMP + diphosphate + H(+). This Shouchella clausii (strain KSM-K16) (Alkalihalobacillus clausii) protein is Histidine--tRNA ligase 2.